We begin with the raw amino-acid sequence, 655 residues long: Endoplasmic reticulum chaperone BiP (655 aa).

A signal peptide spans 1–19 (MMKFTVVAAALLLLGAVRA). The segment at 1-81 (MMKFTVVAAA…EGERLIGDAA (81 aa)) is required for interaction with ELAPOR1. 37–40 (GTTY) is an ATP binding site. Phosphoserine is present on serine 87. Lysine 97 contacts ATP. Lysine 126 carries the N6-acetyllysine modification. The interval 126–281 (KPYIQVDIGG…KKKTGKDVRK (156 aa)) is nucleotide-binding (NBD). Tyrosine 161 is subject to 3'-nitrotyrosine. N6-acetyllysine is present on lysine 214. 228–230 (GGT) is a binding site for ATP. Lysine 272 carries the post-translational modification N6-acetyllysine. Position 294-301 (294-301 (EKAKRALS)) interacts with ATP. Lysine 327 bears the N6-acetyllysine mark. Lysine 353 participates in a covalent cross-link: Glycyl lysine isopeptide (Lys-Gly) (interchain with G-Cter in SUMO2). The residue at position 354 (lysine 354) is an N6-acetyllysine; alternate. A Glycyl lysine isopeptide (Lys-Gly) (interchain with G-Cter in SUMO1); alternate cross-link involves residue lysine 354. 365–368 (GSTR) serves as a coordination point for ATP. Residues 410–420 (QDTGDLVLLDV) form an interdomain linker region. The segment at 421–501 (CPLTLGIETV…PRGVPQIEVT (81 aa)) is substrate-binding (SBD). At lysine 448 the chain carries N6-succinyllysine. The residue at position 493 (arginine 493) is an Omega-N-methylarginine. An O-AMP-threonine; alternate modification is found at threonine 519. The residue at position 519 (threonine 519) is a Phosphothreonine; alternate. Position 586 is an N6,N6,N6-trimethyllysine; by METTL21A; in vitro (lysine 586). Lysine 586 carries the N6,N6-dimethyllysine; alternate modification. Position 586 is an N6-methyllysine; alternate (lysine 586). The residue at position 592 (lysine 592) is an N6-methyllysine. Residues 632 to 655 (ISKLYGSGGPPPTGEEDTSEKDEL) are disordered. A phosphothreonine mark is found at threonine 644 and threonine 649. Over residues 645–655 (GEEDTSEKDEL) the composition is skewed to acidic residues. The residue at position 650 (serine 650) is a Phosphoserine. Residues 652-655 (KDEL) carry the Prevents secretion from ER motif.

Belongs to the heat shock protein 70 family. Monomer and homooligomer; homooligomerization via the interdomain linker inactivates the chaperone activity and acts as a storage of HSPA5/BiP molecules. Interacts with DNAJC1 (via J domain). Component of an EIF2 complex at least composed of CELF1/CUGBP1, CALR, CALR3, EIF2S1, EIF2S2, HSP90B1 and HSPA5. Part of a large chaperone multiprotein complex comprising DNAJB11, HSP90B1, HSPA5, HYOU, PDIA2, PDIA4, PDIA6, PPIB, SDF2L1, UGGT1 and very small amounts of ERP29, but not, or at very low levels, CALR nor CANX. Interacts with TMEM132A and TRIM21. May form a complex with ERLEC1, OS9, SEL1L and SYVN1. Interacts with DNAJC10. Interacts with DNAJB9/ERdj4; leading to recruit HSPA5/BiP to ERN1/IRE1. Interacts with ERN1/IRE1 (via luminal domain); the interaction takes place following interaction with DNAJB9/ERdj4 and leads to inactivate ERN1/IRE1, the interaction also competitively inhibits ERN1 interaction with MANF. Interacts directly with MANF (via SAP domain); the interaction inhibits ATP binding to HSPA5/BiP and subsequent nucleotide exchange. Interacts with ERN1 (via luminal domain); the interaction competitively inhibits ERN1 interaction with MANF. Interacts with EIF2AK3/PERK (via luminal domain); interaction leads to inactivate EIF2AK3/PERK. Interacts with MX1. Interacts with METTL23. Interacts with CEMIP; the interaction induces calcium leakage from the endoplasmic reticulum and cell migration. Interacts with PCSK4 form; the interaction takes place in the endoplasmic reticulum. Interacts with CIPC. Interacts with CCDC88B (via C-terminus); the interaction opposes ERN1-mediated JNK activation, protecting against apoptosis. Interacts with INPP5K; necessary for INPP5K localization at the endoplasmic reticulum. Interacts with MANF; the interaction is direct. Interacts with LOXL2; leading to activate the ERN1/IRE1-XBP1 pathway of the unfolded protein response. Interacts with CLU under stressed condition; interaction increases CLU protein stability; facilitates its retrotranslocation and redistribution to the mitochondria; cooperatively suppress stress-induced apoptosis by stabilizing mitochondrial membrane integrity. Interacts with CCDC47. Interacts with CLN3. Interacts with ELAPOR1; may regulate the function of HSPA5 in apoptosis and cell proliferation. Interacts with CASP7. Interacts with ILDR2; the interaction stabilizes ILDR2 expression. Interacts with ADAM7. In unstressed cells, AMPylation at Thr-519 by FICD inactivates the chaperome activity: AMPylated form is locked in a relatively inert state and only weakly stimulated by J domain-containing proteins. In response to endoplasmic reticulum stress, de-AMPylation by the same protein, FICD, restores the chaperone activity. Expressed in sperm (at protein level).

It localises to the endoplasmic reticulum lumen. The protein resides in the melanosome. Its subcellular location is the cytoplasm. It is found in the cell surface. The catalysed reaction is ATP + H2O = ADP + phosphate + H(+). With respect to regulation, the chaperone activity is regulated by ATP-induced allosteric coupling of the nucleotide-binding (NBD) and substrate-binding (SBD) domains. In the ADP-bound and nucleotide-free (apo) states, the two domains have little interaction. In contrast, in the ATP-bound state the two domains are tightly coupled, which results in drastically accelerated kinetics in both binding and release of polypeptide substrates. J domain-containing co-chaperones (DNAJB9/ERdj4 or DNAJC10/ERdj5) stimulate the ATPase activity and are required for efficient substrate recognition by HSPA5/BiP. Homooligomerization inactivates participating HSPA5/BiP protomers and probably act as reservoirs to store HSPA5/BiP molecules when they are not needed by the cell. Its function is as follows. Endoplasmic reticulum chaperone that plays a key role in protein folding and quality control in the endoplasmic reticulum lumen. Involved in the correct folding of proteins and degradation of misfolded proteins via its interaction with DNAJC10/ERdj5, probably to facilitate the release of DNAJC10/ERdj5 from its substrate. Acts as a key repressor of the EIF2AK3/PERK and ERN1/IRE1-mediated unfolded protein response (UPR). In the unstressed endoplasmic reticulum, recruited by DNAJB9/ERdj4 to the luminal region of ERN1/IRE1, leading to disrupt the dimerization of ERN1/IRE1, thereby inactivating ERN1/IRE1. Also binds and inactivates EIF2AK3/PERK in unstressed cells. Accumulation of misfolded protein in the endoplasmic reticulum causes release of HSPA5/BiP from ERN1/IRE1 and EIF2AK3/PERK, allowing their homodimerization and subsequent activation. Plays an auxiliary role in post-translational transport of small presecretory proteins across endoplasmic reticulum (ER). May function as an allosteric modulator for SEC61 channel-forming translocon complex, likely cooperating with SEC62 to enable the productive insertion of these precursors into SEC61 channel. Appears to specifically regulate translocation of precursors having inhibitory residues in their mature region that weaken channel gating. May also play a role in apoptosis and cell proliferation. This Mus musculus (Mouse) protein is Endoplasmic reticulum chaperone BiP.